We begin with the raw amino-acid sequence, 648 residues long: Spastin (648 aa).

Topologically, residues 1–40 are cytoplasmic; it reads MASTVALLRDSSDDRENFDDGETDCVQVGRKRKLTVFFYP. Residues 41 to 61 constitute an intramembrane region (helical); sequence LLLVFWLLRWVFYQFFLVLCF. At 62–648 the chain is on the cytoplasmic side; that stretch reads VCRGFVPRRH…WNREFGDITV (587 aa). An MIT domain is found at 99–174; the sequence is HKKAFDFISK…EMARDRLDFL (76 aa). Residues 188–346 form a disordered region; it reads PWHGGVAPAQ…SQRSLLSSRV (159 aa). Residues 247–266 are compositionally biased toward low complexity; sequence TGVTLRRQQQQQLGGVSTVS. 414 to 421 contacts ATP; the sequence is GPPGNGKT.

This sequence belongs to the AAA ATPase family. Spastin subfamily. As to quaternary structure, homohexamer. The homohexamer is stabilized by ATP-binding. The homohexamer may adopt a ring conformation through which microtubules pass prior to being severed. Interacts with microtubules.

It is found in the membrane. The protein resides in the cytoplasm. Its subcellular location is the cytoskeleton. The protein localises to the microtubule organizing center. It localises to the centrosome. It catalyses the reaction n ATP + n H2O + a microtubule = n ADP + n phosphate + (n+1) alpha/beta tubulin heterodimers.. Functionally, ATP-dependent microtubule severing protein. Microtubule severing may promote reorganization of cellular microtubule arrays and the release of microtubules from the microtubule organizing center following nucleation. The sequence is that of Spastin (spas) from Ixodes scapularis (Black-legged tick).